The primary structure comprises 211 residues: Dual specificity protein phosphatase 26 (211 aa).

Residues 60–207 form the Tyrosine-protein phosphatase domain; that stretch reads NHADEVWPGL…LLALDRRLRQ (148 aa). The active-site Phosphocysteine intermediate is the Cys-152.

It belongs to the protein-tyrosine phosphatase family. Non-receptor class dual specificity subfamily. Interacts with HSF4.

It is found in the cytoplasm. It localises to the nucleus. Its subcellular location is the golgi apparatus. It carries out the reaction O-phospho-L-tyrosyl-[protein] + H2O = L-tyrosyl-[protein] + phosphate. It catalyses the reaction O-phospho-L-seryl-[protein] + H2O = L-seryl-[protein] + phosphate. The enzyme catalyses O-phospho-L-threonyl-[protein] + H2O = L-threonyl-[protein] + phosphate. In terms of biological role, inactivates MAPK1 and MAPK3 which leads to dephosphorylation of heat shock factor protein 4 and a reduction in its DNA-binding activity. In Rattus norvegicus (Rat), this protein is Dual specificity protein phosphatase 26 (Dusp26).